The following is a 607-amino-acid chain: Elongation factor 4 (607 aa).

In terms of domain architecture, tr-type G spans 11–193 (SRIRNFSIIA…QVVEKVPAPA (183 aa)). Residues 23–28 (DHGKST) and 140–143 (NKID) contribute to the GTP site.

It belongs to the TRAFAC class translation factor GTPase superfamily. Classic translation factor GTPase family. LepA subfamily.

The protein resides in the cell membrane. The enzyme catalyses GTP + H2O = GDP + phosphate + H(+). Its function is as follows. Required for accurate and efficient protein synthesis under certain stress conditions. May act as a fidelity factor of the translation reaction, by catalyzing a one-codon backward translocation of tRNAs on improperly translocated ribosomes. Back-translocation proceeds from a post-translocation (POST) complex to a pre-translocation (PRE) complex, thus giving elongation factor G a second chance to translocate the tRNAs correctly. Binds to ribosomes in a GTP-dependent manner. This is Elongation factor 4 from Shouchella clausii (strain KSM-K16) (Alkalihalobacillus clausii).